The sequence spans 495 residues: E3 ubiquitin-protein ligase RAD18 (495 aa).

N-acetylmethionine is present on M1. The segment at 25–64 adopts an RING-type zinc-finger fold; it reads CGICFEYFNIAMIIPQCSHNYCSLCIRKFLSYKTQCPTCC. Residues S99 and S103 each carry the phosphoserine modification. T118 carries the post-translational modification Phosphothreonine. A phosphoserine mark is found at S122, S125, S142, S158, and S164. Residues 152–197 are disordered; the sequence is ENKSKFSPQKEASPAAKTKETRSVEEIAPDPSEAKRPEPPSTSTLK. The UBZ4-type zinc-finger motif lies at 201–228; sequence KVDCPVCGVNIPESHINKHLDSCLSREE. Residues C204, C207, H219, and C223 each coordinate Zn(2+). Positions 232 to 240 match the LR motif motif; the sequence is SLRSSVHKR. Residues 248–282 form the SAP domain; it reads YNLLSDRDLKKKLKEHGLSIQGNKQQLIKRHQEFV. A Phosphoserine modification is found at S322. Residue K376 forms a Glycyl lysine isopeptide (Lys-Gly) (interchain with G-Cter in SUMO2) linkage. Disordered stretches follow at residues 400 to 423 and 456 to 495; these read NHFSQSKLDSPEELEPDREEDSSS and AWEASHKNDLQDTEISPRQNRRTRAAESAEIEPRNKRNRN. Positions 410 to 421 are enriched in acidic residues; the sequence is PEELEPDREEDS. S471 and S483 each carry phosphoserine. Basic and acidic residues predominate over residues 479–495; it reads RAAESAEIEPRNKRNRN.

It belongs to the RAD18 family. Homodimer. Interacts with UBE2A and UBE2B, one homodimer binding one molecule of UBE2B. Interacts with SHPRH. Interacts with HLTF. Interacts with SPRTN; leading to enhance chromatin association of RAD18 and RAD18-mediated PCNA ubiquitination and translesion DNA synthesis. Interacts (via C-terminus and phosphorylated form) with SLF1 (via BRCT domains); this interaction is required for efficient repair of UV-induced DNA damage. Interacts with SLF2. Interacts with SMC5; this interaction is increased in a SLF1 or SLF2-dependent manner. Interacts with DNA damage up-regulated protein DDUP. Forms a complex with DDUP and H2AX following DDUP phosphorylation.

It localises to the nucleus. The protein resides in the cytoplasm. The protein localises to the cytoskeleton. Its subcellular location is the microtubule organizing center. It is found in the centrosome. It catalyses the reaction S-ubiquitinyl-[E2 ubiquitin-conjugating enzyme]-L-cysteine + [acceptor protein]-L-lysine = [E2 ubiquitin-conjugating enzyme]-L-cysteine + N(6)-ubiquitinyl-[acceptor protein]-L-lysine.. It participates in protein modification; protein ubiquitination. Functionally, E3 ubiquitin-protein ligase involved in postreplication repair of UV-damaged DNA. Postreplication repair functions in gap-filling of a daughter strand on replication of damaged DNA. Associates to the E2 ubiquitin conjugating enzyme UBE2B to form the UBE2B-RAD18 ubiquitin ligase complex involved in mono-ubiquitination of DNA-associated PCNA on 'Lys-164'. Has ssDNA binding activity. In Homo sapiens (Human), this protein is E3 ubiquitin-protein ligase RAD18 (RAD18).